A 396-amino-acid polypeptide reads, in one-letter code: Phosphoglycerate kinase (396 aa).

Substrate is bound by residues 21-23 (DIN), Arg36, 59-62 (HFGR), Arg114, and Arg147. ATP contacts are provided by residues Lys197, Glu319, and 349–352 (GGDT).

It belongs to the phosphoglycerate kinase family. As to quaternary structure, monomer.

The protein localises to the cytoplasm. It catalyses the reaction (2R)-3-phosphoglycerate + ATP = (2R)-3-phospho-glyceroyl phosphate + ADP. The protein operates within carbohydrate degradation; glycolysis; pyruvate from D-glyceraldehyde 3-phosphate: step 2/5. The chain is Phosphoglycerate kinase from Jannaschia sp. (strain CCS1).